The chain runs to 117 residues: NADH dehydrogenase [ubiquinone] 1 beta subcomplex subunit 9 (117 aa).

Ser-2 bears the N-acetylserine mark.

This sequence belongs to the complex I LYR family. In terms of assembly, complex I is composed of at least 49 different subunits. In terms of tissue distribution, expressed in roots, stems, flowers, rosette leaves, cauline leaves and siliques, with the highest expression in the stems.

The protein localises to the mitochondrion inner membrane. Accessory subunit of the mitochondrial membrane respiratory chain NADH dehydrogenase (Complex I), that is believed to be not involved in catalysis. Complex I functions in the transfer of electrons from NADH to the respiratory chain. The immediate electron acceptor for the enzyme is believed to be ubiquinone. Is required for correct plant growth and development. This chain is NADH dehydrogenase [ubiquinone] 1 beta subcomplex subunit 9 (CIB22), found in Arabidopsis thaliana (Mouse-ear cress).